We begin with the raw amino-acid sequence, 83 residues long: Defensin-2 (83 aa).

Residues 1–33 (MAGKGVGTPLSALFLLVLLVVTIGMMEVQVAEG) form the signal peptide. 4 disulfides stabilise this stretch: cysteine 36/cysteine 82, cysteine 47/cysteine 67, cysteine 53/cysteine 76, and cysteine 57/cysteine 78.

The protein belongs to the DEFL family.

The protein resides in the secreted. In terms of biological role, plant defense peptide. Has antifungal activity. This chain is Defensin-2, found in Pinus sylvestris (Scotch pine).